Here is a 185-residue protein sequence, read N- to C-terminus: Ribosome-recycling factor (185 aa).

It belongs to the RRF family.

It is found in the cytoplasm. Its function is as follows. Responsible for the release of ribosomes from messenger RNA at the termination of protein biosynthesis. May increase the efficiency of translation by recycling ribosomes from one round of translation to another. The sequence is that of Ribosome-recycling factor from Treponema denticola (strain ATCC 35405 / DSM 14222 / CIP 103919 / JCM 8153 / KCTC 15104).